The chain runs to 261 residues: Cytochrome c oxidase subunit 3 (261 aa).

Over 1-15 (MAHQAHAYHMVDPSP) the chain is Mitochondrial matrix. The helical transmembrane segment at 16-34 (WPLTGAVAALLMSSGLAIW) threads the bilayer. Over 35–40 (FHLHSM) the chain is Mitochondrial intermembrane. A helical transmembrane segment spans residues 41–66 (TLIVLGMILLILTMIQWWRDIIREGT). The Mitochondrial matrix portion of the chain corresponds to 67 to 72 (FQGHHT). Residues 73–105 (PPVQKGLRYGMILFITSEVFFFLGFFWAFYHSS) form a helical membrane-spanning segment. Over 106-128 (LAPTPELGGCWPPTGLTTLDPFE) the chain is Mitochondrial intermembrane. The helical transmembrane segment at 129–152 (VPLLNTAVLLASGVTVTWAHHSLM) threads the bilayer. Over 153–155 (EGE) the chain is Mitochondrial matrix. The chain crosses the membrane as a helical span at residues 156 to 183 (RKQAIQSLALTILLGLYFTALQAMEYYE). Topologically, residues 184–190 (APFTIAD) are mitochondrial intermembrane. A helical membrane pass occupies residues 191–223 (GVYGSTFFVATGFHGLHVIIGSTFLAVCLLRQV). Topologically, residues 224-232 (LFHFTSDHH) are mitochondrial matrix. The chain crosses the membrane as a helical span at residues 233–256 (FGFEAAAWYWHFVDVVWLFLYVSI). The Mitochondrial intermembrane portion of the chain corresponds to 257-261 (YWWGS).

This sequence belongs to the cytochrome c oxidase subunit 3 family. In terms of assembly, component of the cytochrome c oxidase (complex IV, CIV), a multisubunit enzyme composed of 14 subunits. The complex is composed of a catalytic core of 3 subunits MT-CO1, MT-CO2 and MT-CO3, encoded in the mitochondrial DNA, and 11 supernumerary subunits COX4I, COX5A, COX5B, COX6A, COX6B, COX6C, COX7A, COX7B, COX7C, COX8 and NDUFA4, which are encoded in the nuclear genome. The complex exists as a monomer or a dimer and forms supercomplexes (SCs) in the inner mitochondrial membrane with NADH-ubiquinone oxidoreductase (complex I, CI) and ubiquinol-cytochrome c oxidoreductase (cytochrome b-c1 complex, complex III, CIII), resulting in different assemblies (supercomplex SCI(1)III(2)IV(1) and megacomplex MCI(2)III(2)IV(2)).

The protein resides in the mitochondrion inner membrane. It catalyses the reaction 4 Fe(II)-[cytochrome c] + O2 + 8 H(+)(in) = 4 Fe(III)-[cytochrome c] + 2 H2O + 4 H(+)(out). Component of the cytochrome c oxidase, the last enzyme in the mitochondrial electron transport chain which drives oxidative phosphorylation. The respiratory chain contains 3 multisubunit complexes succinate dehydrogenase (complex II, CII), ubiquinol-cytochrome c oxidoreductase (cytochrome b-c1 complex, complex III, CIII) and cytochrome c oxidase (complex IV, CIV), that cooperate to transfer electrons derived from NADH and succinate to molecular oxygen, creating an electrochemical gradient over the inner membrane that drives transmembrane transport and the ATP synthase. Cytochrome c oxidase is the component of the respiratory chain that catalyzes the reduction of oxygen to water. Electrons originating from reduced cytochrome c in the intermembrane space (IMS) are transferred via the dinuclear copper A center (CU(A)) of subunit 2 and heme A of subunit 1 to the active site in subunit 1, a binuclear center (BNC) formed by heme A3 and copper B (CU(B)). The BNC reduces molecular oxygen to 2 water molecules using 4 electrons from cytochrome c in the IMS and 4 protons from the mitochondrial matrix. In Danio rerio (Zebrafish), this protein is Cytochrome c oxidase subunit 3 (mt-co3).